Here is a 456-residue protein sequence, read N- to C-terminus: MFS-type transporter ppzB (456 aa).

Transmembrane regions (helical) follow at residues 1-21 (MGLFTDLVLYGIVLPALPFIM), 38-58 (GFLATYAGASVFFSVPAGWAA), 72-92 (VFLFVATAIFAFSTSLALLVV), 125-145 (IGTIFATISVGELAAPVLGGV), and 154-174 (AVFAVSAVMLAIDLGLRGLVI). Residues 206–225 (EAQERTHEGTPLLPQDDDDD) form a disordered region. The next 6 membrane-spanning stretches (helical) occupy residues 255–275 (LAMLLSFVQALFIGTFDATVP), 284–304 (FSSLQVGLVFIALMLPYFALG), 318–338 (AAATSGYAFLVPCLLLLGLPE), 348–368 (VALFCTILALNGIGLAVVTSP), 398–418 (FGFSSLYFFTGLAVGPLLGGV), and 427–447 (VMGAVYAAISGVTAIVSFLFV).

This sequence belongs to the major facilitator superfamily. TCR/Tet family.

Its subcellular location is the membrane. MFS-type transporter; part of the gene cluster that mediates the biosynthesis of pyrrolopyrazines, secondary metabolites showing insecticidal activity. Probably involved in the secretion of peramine and other pyrrolopyrazines. The protein is MFS-type transporter ppzB (ppzB) of Metarhizium majus (strain ARSEF 297).